A 248-amino-acid polypeptide reads, in one-letter code: DNA/RNA-binding protein ALBA1 (248 aa).

Residues 217 to 248 (GRDGGYRGGNRGGSRSGFRGGRGGFRGGRALS) are disordered. Gly residues predominate over residues 222 to 248 (YRGGNRGGSRSGFRGGRGGFRGGRALS).

The protein belongs to the histone-like Alba family. As to quaternary structure, may form homodimers. Identified in a TARE6-associated complex consisting of over 30 proteins and including ALBA1, ALBA2 and ALBA4; the complex binds to the non-coding subtelomeric repeat region TARE6.

It is found in the nucleus. The protein resides in the chromosome. It localises to the telomere. Its subcellular location is the cytoplasm. In terms of biological role, possesses DNA- and RNA-binding activities. During the asexual blood stages binds to a sub-population of mature mRNAs and regulates the timing of their translation. Binds to DNA with relaxed sequence specificity. Associates with the subtelomeric TARE6 repeats. The protein is DNA/RNA-binding protein ALBA1 of Plasmodium falciparum (isolate 3D7).